Consider the following 717-residue polypeptide: Polyribonucleotide nucleotidyltransferase (717 aa).

2 residues coordinate Mg(2+): Asp-486 and Asp-492. Residues 553–612 (PKIVQLQIDIDKISLVIGSTGKTVKAITDEFEVRVQIEQDGRITLFGTDNLKMQKAKAKI) enclose the KH domain. In terms of domain architecture, S1 motif spans 622-715 (GEIYDGIVKK…KFGKIELELA (94 aa)). Residues 650–681 (SNRSRSRDDRYGSDIRHSRYSNRNSRYGRDNR) form a disordered region. Over residues 654-666 (RSRDDRYGSDIRH) the composition is skewed to basic and acidic residues.

It belongs to the polyribonucleotide nucleotidyltransferase family. Mg(2+) is required as a cofactor.

It is found in the cytoplasm. It catalyses the reaction RNA(n+1) + phosphate = RNA(n) + a ribonucleoside 5'-diphosphate. In terms of biological role, involved in mRNA degradation. Catalyzes the phosphorolysis of single-stranded polyribonucleotides processively in the 3'- to 5'-direction. The sequence is that of Polyribonucleotide nucleotidyltransferase from Borrelia duttonii (strain Ly).